The chain runs to 202 residues: GTP cyclohydrolase 1 (202 aa).

Residues cysteine 90, histidine 93, and cysteine 163 each contribute to the Zn(2+) site.

The protein belongs to the GTP cyclohydrolase I family. In terms of assembly, homomer.

The enzyme catalyses GTP + H2O = 7,8-dihydroneopterin 3'-triphosphate + formate + H(+). The protein operates within cofactor biosynthesis; 7,8-dihydroneopterin triphosphate biosynthesis; 7,8-dihydroneopterin triphosphate from GTP: step 1/1. This is GTP cyclohydrolase 1 from Mycolicibacterium gilvum (strain PYR-GCK) (Mycobacterium gilvum (strain PYR-GCK)).